A 592-amino-acid polypeptide reads, in one-letter code: Glutamine-rich protein 2 (592 aa).

Positions 488-592 are disordered; the sequence is QLQQAQHARP…TRGPRSTAAH (105 aa). The segment covering 544-567 has biased composition (polar residues); the sequence is LQSNVSHSSIPTDIASLQGSQQGL.

As to quaternary structure, interacts with AKAP3, ODF2 and TSSK4. Interacts with AKAP4. As to expression, expressed in testis. Not detected in heart, brain, kidney, stomach, ovary, liver, lung and uterus.

Its subcellular location is the nucleus membrane. The protein resides in the nucleus. It localises to the cytoplasm. It is found in the cell projection. The protein localises to the cilium. Its subcellular location is the flagellum. Has an essential role in the formation of sperm flagella and flagellar structure maintainance. It acts as a suppressor of ubiquitination and degradation of proteins involved in flagellar development and motility. The protein is Glutamine-rich protein 2 of Mus musculus (Mouse).